We begin with the raw amino-acid sequence, 160 residues long: Eukaryotic translation initiation factor 5A-4 (160 aa).

Residues 1-12 are compositionally biased toward basic and acidic residues; it reads MSDEEHHFESKA. A disordered region spans residues 1-21; the sequence is MSDEEHHFESKADAGASKTYP. Residue Lys-52 is modified to Hypusine.

The protein belongs to the eIF-5A family. Lys-52 undergoes hypusination, a unique post-translational modification that consists in the addition of a butylamino group from spermidine to lysine side chain, leading to the formation of the unusual amino acid hypusine. eIF-5As are the only known proteins to undergo this modification, which is essential for their function.

In terms of biological role, translation factor that promotes translation elongation and termination, particularly upon ribosome stalling at specific amino acid sequence contexts. Binds between the exit (E) and peptidyl (P) site of the ribosome and promotes rescue of stalled ribosome: specifically required for efficient translation of polyproline-containing peptides as well as other motifs that stall the ribosome. Acts as a ribosome quality control (RQC) cofactor by joining the RQC complex to facilitate peptidyl transfer during CAT tailing step. The protein is Eukaryotic translation initiation factor 5A-4 of Solanum lycopersicum (Tomato).